A 154-amino-acid polypeptide reads, in one-letter code: Transcriptional repressor NrdR (154 aa).

Residues 3 to 34 (CPFCGANDTKVIDSRLVAEGEQVRRRRECLAC) fold into a zinc finger. The ATP-cone domain occupies 49–139 (PRLIKQDGSR…VYRRFQDLNE (91 aa)).

Belongs to the NrdR family. Zn(2+) is required as a cofactor.

Negatively regulates transcription of bacterial ribonucleotide reductase nrd genes and operons by binding to NrdR-boxes. The chain is Transcriptional repressor NrdR from Pseudomonas syringae pv. tomato (strain ATCC BAA-871 / DC3000).